A 452-amino-acid polypeptide reads, in one-letter code: Glutamyl-tRNA(Gln) amidotransferase subunit A (452 aa).

Residues Lys-56 and Ser-131 each act as charge relay system in the active site. Residue Ser-155 is the Acyl-ester intermediate of the active site.

Belongs to the amidase family. GatA subfamily. Heterotrimer of A, B and C subunits.

It carries out the reaction L-glutamyl-tRNA(Gln) + L-glutamine + ATP + H2O = L-glutaminyl-tRNA(Gln) + L-glutamate + ADP + phosphate + H(+). Allows the formation of correctly charged Gln-tRNA(Gln) through the transamidation of misacylated Glu-tRNA(Gln) in organisms which lack glutaminyl-tRNA synthetase. The reaction takes place in the presence of glutamine and ATP through an activated gamma-phospho-Glu-tRNA(Gln). This Campylobacter concisus (strain 13826) protein is Glutamyl-tRNA(Gln) amidotransferase subunit A.